We begin with the raw amino-acid sequence, 106 residues long: Large ribosomal subunit protein bL21 (106 aa).

Belongs to the bacterial ribosomal protein bL21 family. As to quaternary structure, part of the 50S ribosomal subunit. Contacts protein L20.

Its function is as follows. This protein binds to 23S rRNA in the presence of protein L20. This is Large ribosomal subunit protein bL21 from Xanthomonas euvesicatoria pv. vesicatoria (strain 85-10) (Xanthomonas campestris pv. vesicatoria).